Reading from the N-terminus, the 473-residue chain is Ral-GDS-related protein (473 aa).

Residues 117-215 (EPNEAKPDDP…NQPSEELPDM (99 aa)) are disordered. Residues 134–157 (ALTMPALEPAPPLLADLGPALEPE) are compositionally biased toward low complexity. Over residues 173-185 (GPAPAPGEGPPPG) the composition is skewed to pro residues. Residues 219-471 (PPRLLAEQLT…YKLSCQLEPE (253 aa)) enclose the Ras-GEF domain.

It is found in the cytoplasmic vesicle. The sequence is that of Ral-GDS-related protein (RGL4) from Homo sapiens (Human).